The chain runs to 426 residues: Histidine--tRNA ligase (426 aa).

This sequence belongs to the class-II aminoacyl-tRNA synthetase family. Homodimer.

It is found in the cytoplasm. It carries out the reaction tRNA(His) + L-histidine + ATP = L-histidyl-tRNA(His) + AMP + diphosphate + H(+). The protein is Histidine--tRNA ligase of Streptococcus equi subsp. zooepidemicus (strain MGCS10565).